An 87-amino-acid polypeptide reads, in one-letter code: Beta-toxin CsE3 (87 aa).

A signal peptide spans 1 to 19 (MNSLLIIAACLALIGTVWA). One can recognise an LCN-type CS-alpha/beta domain in the interval 20–85 (KEGYIVNYHT…VWPLPKKKCN (66 aa)). 4 disulfide bridges follow: Cys-31–Cys-84, Cys-35–Cys-60, Cys-44–Cys-65, and Cys-48–Cys-67. Asn-85 is subject to Asparagine amide.

It belongs to the long (4 C-C) scorpion toxin superfamily. Sodium channel inhibitor family. Beta subfamily. As to expression, expressed by the venom gland.

The protein localises to the secreted. Functionally, beta toxins bind voltage-independently at site-4 of sodium channels (Nav) and shift the voltage of activation toward more negative potentials thereby affecting sodium channel activation and promoting spontaneous and repetitive firing. The sequence is that of Beta-toxin CsE3 from Centruroides sculpturatus (Arizona bark scorpion).